Consider the following 612-residue polypeptide: Dihydroxy-acid dehydratase (612 aa).

Asp-81 lines the Mg(2+) pocket. [2Fe-2S] cluster is bound at residue Cys-122. Positions 123 and 124 each coordinate Mg(2+). At Lys-124 the chain carries N6-carboxylysine. Cys-193 is a binding site for [2Fe-2S] cluster. Glu-489 serves as a coordination point for Mg(2+). Ser-515 functions as the Proton acceptor in the catalytic mechanism.

The protein belongs to the IlvD/Edd family. In terms of assembly, homodimer. The cofactor is [2Fe-2S] cluster. It depends on Mg(2+) as a cofactor.

It carries out the reaction (2R)-2,3-dihydroxy-3-methylbutanoate = 3-methyl-2-oxobutanoate + H2O. It catalyses the reaction (2R,3R)-2,3-dihydroxy-3-methylpentanoate = (S)-3-methyl-2-oxopentanoate + H2O. The protein operates within amino-acid biosynthesis; L-isoleucine biosynthesis; L-isoleucine from 2-oxobutanoate: step 3/4. It participates in amino-acid biosynthesis; L-valine biosynthesis; L-valine from pyruvate: step 3/4. In terms of biological role, functions in the biosynthesis of branched-chain amino acids. Catalyzes the dehydration of (2R,3R)-2,3-dihydroxy-3-methylpentanoate (2,3-dihydroxy-3-methylvalerate) into 2-oxo-3-methylpentanoate (2-oxo-3-methylvalerate) and of (2R)-2,3-dihydroxy-3-methylbutanoate (2,3-dihydroxyisovalerate) into 2-oxo-3-methylbutanoate (2-oxoisovalerate), the penultimate precursor to L-isoleucine and L-valine, respectively. This is Dihydroxy-acid dehydratase from Xanthomonas campestris pv. campestris (strain 8004).